A 175-amino-acid chain; its full sequence is Large ribosomal subunit protein uL10 (175 aa).

Belongs to the universal ribosomal protein uL10 family. In terms of assembly, part of the ribosomal stalk of the 50S ribosomal subunit. The N-terminus interacts with L11 and the large rRNA to form the base of the stalk. The C-terminus forms an elongated spine to which L12 dimers bind in a sequential fashion forming a multimeric L10(L12)X complex.

In terms of biological role, forms part of the ribosomal stalk, playing a central role in the interaction of the ribosome with GTP-bound translation factors. The protein is Large ribosomal subunit protein uL10 of Psychrobacter arcticus (strain DSM 17307 / VKM B-2377 / 273-4).